The following is a 345-amino-acid chain: Anthranilate phosphoribosyltransferase (345 aa).

5-phospho-alpha-D-ribose 1-diphosphate-binding positions include T77–G79, G82–D83, T87, N89–T92, K106–G114, and S118. G79 lines the anthranilate pocket. S91 serves as a coordination point for Mg(2+). An anthranilate-binding site is contributed by N109. R164 contacts anthranilate. 2 residues coordinate Mg(2+): D223 and E224.

The protein belongs to the anthranilate phosphoribosyltransferase family. Homodimer. Requires Mg(2+) as cofactor.

The catalysed reaction is N-(5-phospho-beta-D-ribosyl)anthranilate + diphosphate = 5-phospho-alpha-D-ribose 1-diphosphate + anthranilate. It functions in the pathway amino-acid biosynthesis; L-tryptophan biosynthesis; L-tryptophan from chorismate: step 2/5. Functionally, catalyzes the transfer of the phosphoribosyl group of 5-phosphorylribose-1-pyrophosphate (PRPP) to anthranilate to yield N-(5'-phosphoribosyl)-anthranilate (PRA). This is Anthranilate phosphoribosyltransferase from Saccharolobus solfataricus (strain ATCC 35092 / DSM 1617 / JCM 11322 / P2) (Sulfolobus solfataricus).